Here is a 608-residue protein sequence, read N- to C-terminus: Protein Spindly (608 aa).

Residue Met1 is modified to N-acetylmethionine. Residues 1-445 are a coiled coil; sequence MEADITNLRN…LKLKYEPEER (445 aa). The tract at residues 465–487 is disordered; it reads PEETEETAAASATEDGVSRLPPH. Residues Ser516, Ser518, and Ser558 each carry the phosphoserine modification.

This sequence belongs to the Spindly family. Interacts with KNTC1 and ZW10. These interactions appear weak and may be transient or indirect. Interacts with dynein intermediate chain and dynactin (DCTN1). Interacts with the catalytically active form of USP45. Post-translationally, monoubiquitinated with'Lys-48' linkage. Deubiquitinated by USP45.

The protein localises to the cytoplasm. Its subcellular location is the cytoskeleton. It localises to the microtubule organizing center. The protein resides in the centrosome. It is found in the chromosome. The protein localises to the centromere. Its subcellular location is the kinetochore. It localises to the nucleus. The protein resides in the spindle pole. Functionally, required for the localization of dynein and dynactin to the mitotic kintochore. Dynein is believed to control the initial lateral interaction between the kinetochore and spindle microtubules and to facilitate the subsequent formation of end-on kinetochore-microtubule attachments mediated by the NDC80 complex. Also required for correct spindle orientation. Does not appear to be required for the removal of spindle assembly checkpoint (SAC) proteins from the kinetochore upon bipolar spindle attachment. Acts as an adapter protein linking the dynein motor complex to various cargos and converts dynein from a non-processive to a highly processive motor in the presence of dynactin. Facilitates the interaction between dynein and dynactin and activates dynein processivity (the ability to move along a microtubule for a long distance without falling off the track). Plays a role in cell migration. This is Protein Spindly (Spdl1) from Mus musculus (Mouse).